The chain runs to 550 residues: Alkaline phosphatase PhoV (550 aa).

The signal sequence occupies residues 1–20; it reads MKIKLLCISLAVLFCSSANA. The Zn(2+) site is built by Asp48 and Thr89. The active-site Phosphothreonine intermediate is the Thr89. Substrate-binding positions include Asn110 and 171 to 173; that span reads KDR. Zn(2+) contacts are provided by Asp313, His317, Asp360, His361, and His491.

Zn(2+) serves as cofactor.

It is found in the cell inner membrane. The catalysed reaction is a phosphate monoester + H2O = an alcohol + phosphate. Subject to competitive inhibition by phosphate. Inhibited by manganese. Magnesium mildly increases enzyme activity when the zinc concentration is suboptimal. Optimal activity is dependent on the presence of 0.01-2% Triton X-100. Triton X-100 at a concentration of 0.05% increases the activity about fivefold relative to that in its absence. The enzyme is even active in Triton X-100 concentrations up to 80%. 50% inhibition by 4 mM EDTA and 50% inhibition by 48 mM sodium citrate. Alkaline phosphatase with broad substrate specificity. In Synechococcus elongatus (strain ATCC 33912 / PCC 7942 / FACHB-805) (Anacystis nidulans R2), this protein is Alkaline phosphatase PhoV.